The primary structure comprises 461 residues: Thyroid hormone receptor beta (461 aa).

A disordered region spans residues 1–24; that stretch reads MTPNSMTENGLPAWDKQKPRPDRG. The interval 1–106 is modulating; sequence MTPNSMTENG…IPSYLDKDEL (106 aa). Over residues 15–24 the composition is skewed to basic and acidic residues; the sequence is DKQKPRPDRG. Cysteine 107, cysteine 110, cysteine 124, cysteine 127, cysteine 145, cysteine 151, cysteine 161, and cysteine 164 together coordinate Zn(2+). 2 consecutive NR C4-type zinc fingers follow at residues 107–127 and 145–169; these read CVVC…CEGC and CKYE…FKKC. A DNA-binding region (nuclear receptor) is located at residues 107–181; it reads CVVCGDKATG…VGMATDLVLD (75 aa). The region spanning 217-461 is the NR LBD domain; sequence EEWELIKTVT…PPLFLEVFED (245 aa). Residues 244-461 form an interaction with NR2F6 region; the sequence is KFLPEDIGQA…PPLFLEVFED (218 aa). 3,3',5-triiodo-L-thyronine is bound by residues arginine 282, asparagine 331, and histidine 435. L-thyroxine contacts are provided by arginine 282, asparagine 331, and histidine 435.

This sequence belongs to the nuclear hormone receptor family. NR1 subfamily. Binds DNA as a dimer; homodimer and heterodimer with RXRB. Interacts with the coactivators NCOA1/SRC1, NCOA2/GRIP1, NCOA7 and MED1/TRAP220 in a ligand-inducible manner. Interacts with the corepressor NCOR1 in absence of ligand. Interacts with C1D. Interacts with NR2F6; the interaction impairs the binding of the THRB homodimer and THRB:RXRB heterodimer to T3 response elements. Interacts with PRMT2 and THRSP. Interacts with TACC1; this interaction is decreased in the presence of thyroid hormone T3.

Its subcellular location is the nucleus. Its function is as follows. Nuclear hormone receptor that can act as a repressor or activator of transcription. High affinity receptor for thyroid hormones, including triiodothyronine and thyroxine. This chain is Thyroid hormone receptor beta (Thrb), found in Mus musculus (Mouse).